A 244-amino-acid chain; its full sequence is Adiponectin (244 aa).

The signal sequence occupies residues methionine 1–glutamine 18. O-linked (GalNAc...) threonine glycans are attached at residues threonine 21 and threonine 22. Lysine 33 carries the post-translational modification 5-hydroxylysine. The residue at position 36 (cysteine 36) is an S-(2-succinyl)cysteine. A disordered region spans residues methionine 40–lysine 101. Residues glycine 42 to glycine 107 enclose the Collagen-like domain. A 4-hydroxyproline mark is found at proline 44, proline 47, and proline 53. Over residues arginine 55 to aspartate 70 the composition is skewed to basic and acidic residues. 5-hydroxylysine occurs at positions 65 and 68. 2 O-linked (Gal...) hydroxylysine; partial glycosylation sites follow: lysine 65 and lysine 68. Residues proline 71 and proline 76 each carry the 4-hydroxyproline; partial modification. Position 77 is a 5-hydroxylysine (lysine 77). Residue lysine 77 is glycosylated (O-linked (Gal...) hydroxylysine; partial). A 4-hydroxyproline modification is found at proline 91. The residue at position 95 (proline 95) is a 4-hydroxyproline; partial. Lysine 101 carries the post-translational modification 5-hydroxylysine. A glycan (O-linked (Gal...) hydroxylysine; partial) is linked at lysine 101. In terms of domain architecture, C1q spans alanine 108–asparagine 244.

As to quaternary structure, homomultimer. Forms trimers, hexamers and 12- to 18-mers. The trimers (low molecular weight complexes / LMW) are assembled via non-covalent interactions of the collagen-like domains in a triple helix and hydrophobic interactions within the globular C1q domain. Several trimers can associate to form disulfide-linked hexamers (middle molecular weight complexes / MMW) and larger complexes (higher molecular weight / HMW). The HMW-complex assembly is also modulated by the degree of lysine hydroxylation and glycosylation. LMW, MMW and HMW complexes bind to HBEGF, MMW and HMW complexes bind to PDGFB, and HMW complex binds to FGF2. Interacts with CTRP9 via the C1q domain (heterotrimeric complex). In terms of processing, HMW complexes are more extensively glycosylated than smaller oligomers. Hydroxylation and glycosylation of the lysine residues within the collagen-like domain of adiponectin seem to be critically involved in regulating the formation and/or secretion of HMW complexes and consequently contribute to the insulin-sensitizing activity of adiponectin in hepatocytes. Post-translationally, O-glycosylated. Not N-glycosylated. O-linked glycans on hydroxylysines consist of Glc-Gal disaccharides bound to the oxygen atom of post-translationally added hydroxyl groups. Sialylated to varying degrees depending on tissue. Thr-22 appears to be the major site of sialylation. Higher sialylation found in SGBS adipocytes than in HEK fibroblasts. Sialylation is not required neither for heterodimerization nor for secretion. Not sialylated on the glycosylated hydroxylysines. Desialylated forms are rapidly cleared from the circulation. Succination of Cys-36 by the Krebs cycle intermediate fumarate, which leads to S-(2-succinyl)cysteine residues, inhibits polymerization and secretion of adiponectin. Adiponectin is a major target for succination in both adipocytes and adipose tissue of diabetic mammals. It was proposed that succination of proteins is a biomarker of mitochondrial stress and accumulation of Krebs cycle intermediates in adipose tissue in diabetes and that succination of adiponectin may contribute to the decrease in plasma adiponectin in diabetes. In terms of tissue distribution, synthesized exclusively by adipocytes and secreted into plasma.

It is found in the secreted. With respect to regulation, polymerization and secretion of adiponectin is inhibited by succination of cysteine residues by the Krebs cycle intermediate fumarate, which leads to S-(2-succinyl)cysteine residues. Its function is as follows. Important adipokine involved in the control of fat metabolism and insulin sensitivity, with direct anti-diabetic, anti-atherogenic and anti-inflammatory activities. Stimulates AMPK phosphorylation and activation in the liver and the skeletal muscle, enhancing glucose utilization and fatty-acid combustion. Antagonizes TNF-alpha by negatively regulating its expression in various tissues such as liver and macrophages, and also by counteracting its effects. Inhibits endothelial NF-kappa-B signaling through a cAMP-dependent pathway. May play a role in cell growth, angiogenesis and tissue remodeling by binding and sequestering various growth factors with distinct binding affinities, depending on the type of complex, LMW, MMW or HMW. This Homo sapiens (Human) protein is Adiponectin (ADIPOQ).